Reading from the N-terminus, the 139-residue chain is D-ribose pyranase (139 aa).

His20 serves as the catalytic Proton donor. Residues Asp28, His106, and 128–130 (YAN) contribute to the substrate site.

Belongs to the RbsD / FucU family. RbsD subfamily. Homodecamer.

Its subcellular location is the cytoplasm. It catalyses the reaction beta-D-ribopyranose = beta-D-ribofuranose. It functions in the pathway carbohydrate metabolism; D-ribose degradation; D-ribose 5-phosphate from beta-D-ribopyranose: step 1/2. Functionally, catalyzes the interconversion of beta-pyran and beta-furan forms of D-ribose. The protein is D-ribose pyranase of Salmonella arizonae (strain ATCC BAA-731 / CDC346-86 / RSK2980).